The sequence spans 56 residues: MAGKSAREKIKLVSSAGTGHFYTTDKNKRNTPHKLEMKKYDPVVRKHVTYRETKLK.

Belongs to the bacterial ribosomal protein bL33 family.

This is Large ribosomal subunit protein bL33 from Halorhodospira halophila (strain DSM 244 / SL1) (Ectothiorhodospira halophila (strain DSM 244 / SL1)).